A 493-amino-acid polypeptide reads, in one-letter code: Glycerol kinase (493 aa).

T11 serves as a coordination point for ADP. ATP-binding residues include T11, T12, and S13. Position 11 (T11) interacts with sn-glycerol 3-phosphate. R15 lines the ADP pocket. Residues R80, E81, Y132, and D241 each contribute to the sn-glycerol 3-phosphate site. Glycerol contacts are provided by R80, E81, Y132, D241, and Q242. ADP-binding residues include T263 and G306. Positions 263, 306, 310, and 408 each coordinate ATP. G408 contributes to the ADP binding site.

Belongs to the FGGY kinase family.

It carries out the reaction glycerol + ATP = sn-glycerol 3-phosphate + ADP + H(+). Its pathway is polyol metabolism; glycerol degradation via glycerol kinase pathway; sn-glycerol 3-phosphate from glycerol: step 1/1. Inhibited by fructose 1,6-bisphosphate (FBP). Key enzyme in the regulation of glycerol uptake and metabolism. Catalyzes the phosphorylation of glycerol to yield sn-glycerol 3-phosphate. This Cereibacter sphaeroides (strain KD131 / KCTC 12085) (Rhodobacter sphaeroides) protein is Glycerol kinase.